A 44-amino-acid chain; its full sequence is Homeobox protein DLX-1 (44 aa).

A disordered region spans residues 19 to 44 (RALSAGSPPVPPGWNRIPPLGRAQEE).

It belongs to the distal-less homeobox family. In terms of assembly, interacts with SMAD4 (via homeobox DNA-binding domain). Interacts (via homeobox DNA-binding domain) with POU4F2; this interaction suppresses DLX1-mediated transcriptional activity in postnatal retina and enhances retinal ganglion cell (RGC) differentiation.

The protein resides in the nucleus. Plays a role as a transcriptional activator or repressor. Inhibits several cytokine signaling pathways, such as TGFB1, activin-A/INHBA and BMP4 by interfering with the transcriptional stimulatory activity of transcription factors, such as MSX2, FAST2, SMAD2 and SMAD3 during hematopoietic cell differentiation. Plays a role in terminal differentiation of interneurons, such as amacrine and bipolar cells in the developing retina. Likely to play a regulatory role in the development of the ventral forebrain. May play a role in craniofacial patterning and morphogenesis and may be involved in the early development of diencephalic subdivisions. The polypeptide is Homeobox protein DLX-1 (Dlx1) (Rattus norvegicus (Rat)).